The chain runs to 141 residues: Large ribosomal subunit protein bL17 (141 aa).

The protein belongs to the bacterial ribosomal protein bL17 family. As to quaternary structure, part of the 50S ribosomal subunit. Contacts protein L32.

This Allorhizobium ampelinum (strain ATCC BAA-846 / DSM 112012 / S4) (Agrobacterium vitis (strain S4)) protein is Large ribosomal subunit protein bL17.